The chain runs to 173 residues: Small ribosomal subunit protein uS5 (173 aa).

One can recognise an S5 DRBM domain in the interval 18 to 81 (LREKMIAVNR…EQARRGMFKV (64 aa)).

Belongs to the universal ribosomal protein uS5 family. As to quaternary structure, part of the 30S ribosomal subunit. Contacts proteins S4 and S8.

In terms of biological role, with S4 and S12 plays an important role in translational accuracy. Functionally, located at the back of the 30S subunit body where it stabilizes the conformation of the head with respect to the body. The chain is Small ribosomal subunit protein uS5 from Bordetella petrii (strain ATCC BAA-461 / DSM 12804 / CCUG 43448).